Consider the following 102-residue polypeptide: Protamine-2 (102 aa).

The tract at residues 1–102 (MVRYRVRSPS…RTRRRTCRKH (102 aa)) is disordered. Phosphoserine occurs at positions 8, 10, and 37. A compositionally biased stretch (basic and acidic residues) spans 39–48 (EHVEVYERTH). Over residues 49-102 (GHSHYRRRHCSRRRLRRIHRQQHRSCRRRKRRSCRHRRRHRRGCRTRRRTCRKH) the composition is skewed to basic residues.

Belongs to the protamine P2 family. In terms of assembly, interacts with TDRP. Post-translationally, proteolytic processing into mature chains is required for histone eviction during spermatogenesis. Transition proteins (TNP1 and TNP2) are required for processing. Testis.

The protein localises to the nucleus. The protein resides in the chromosome. Protamines substitute for histones in the chromatin of sperm during the haploid phase of spermatogenesis. They compact sperm DNA into a highly condensed, stable and inactive complex. The protein is Protamine-2 (PRM2) of Pan paniscus (Pygmy chimpanzee).